Here is an 831-residue protein sequence, read N- to C-terminus: MTRTFDIDYVLANISDQDKIALLSGIDFWHTHPIPQFNVPSVRVTDGPNGIRGTKFFAGVPAACLPCGTALGATWDRDLLRRAGELLGDECIAKGAHCWLGPTVNMQRSPLGGRGFESFSEDPYLAGVAAASMIVGCESKGIIATVKHFVGNDQEHERRAVDVIVTPRALREIYLRPFQIVARDARPGALMTSYNKVNGKHVVEDPKMYDLIRKDWGWDPLVMSDWYGTYTTIDSTNAGLDLEMPGVSRYRGKYIESAMQARLIKSSTLDARARKVLEFVQRASRTKVSEVEKGRNHPEDRALMRTLCSNSIVLLKNEENILPLPKNVKKIALIGSHIKTPAISGGGSAALKPYYASTLYDAVREALPNAEVLYETGAHAHNMLPVIDRLLSNAVIHFYNEPMTQPNRKCLGTEPVTTTAFQFMDYKLAGLNRALFWSTLIGDFTPDQSGIWDFGLSVFGTANLYINDELIIDNTTKQTKGTSFFGKGTREEIGSMKLTAGQTYKIRIEFGSANTTTMKTTGMVNFGGGAANLGASLRLDAEEMINRAVKAAEDADYAIICTGLNQDWESEGFDRPHMDLPPVGIDKMISGVLDIAAHKTVIVNQSGTPVTMPWASRAKSIVHSWYGGNETGHGIADILFGDVNPSGKLSLSWPIDVRHNPAYLNYASVGGRVLYGEDIYVGYRFYEKTGREVLFPFGHGLSYTTFAVSPEALVSPGTFTPENPSNATVKIKNIGGAAGAQVLQLYVAAPNSPTPRPQKELQGFEKVFLRPGEEKTVIIRLDKYATSFWDEIEGMWKSEAGVYEVLIGTSSEDIVARGQFEVNQTRYWSGL.

Residue N13 is glycosylated (N-linked (GlcNAc...) asparagine). D225 is an active-site residue. The 161-residue stretch at 389–549 folds into the PA14 domain; the sequence is RLLSNAVIHF…DAEEMINRAV (161 aa). 6 N-linked (GlcNAc...) asparagine glycosylation sites follow: N474, N514, N604, N629, N726, and N823.

The protein belongs to the glycosyl hydrolase 3 family.

Its subcellular location is the secreted. The catalysed reaction is Hydrolysis of terminal, non-reducing beta-D-glucosyl residues with release of beta-D-glucose.. It functions in the pathway glycan metabolism; cellulose degradation. Functionally, beta-glucosidases are one of a number of cellulolytic enzymes involved in the degradation of cellulosic biomass. Catalyzes the last step releasing glucose from the inhibitory cellobiose. This Emericella nidulans (strain FGSC A4 / ATCC 38163 / CBS 112.46 / NRRL 194 / M139) (Aspergillus nidulans) protein is Probable beta-glucosidase H (bglH).